A 126-amino-acid chain; its full sequence is MMTPTIPVSPLDRLLVEGIGPHELVRRKLMCLFNSCASAGGETLPPLLTRGMPEWHGLNVGDKRVLNWFCRELRAAILRYEPRINVLRVSVKDAYHQPLALYLEAILQDEPEPLRLDITYYNGRWR.

This sequence belongs to the GpW/Gp25 family. IraD subfamily. Interacts with RssB.

It is found in the cytoplasm. Functionally, inhibits RpoS proteolysis by regulating RssB activity, thereby increasing the stability of the sigma stress factor RpoS during oxidative stress. Its effect on RpoS stability is due to its interaction with RssB, which probably blocks the interaction of RssB with RpoS, and the consequent delivery of the RssB-RpoS complex to the ClpXP protein degradation pathway. The chain is Anti-adapter protein IraD from Salmonella arizonae (strain ATCC BAA-731 / CDC346-86 / RSK2980).